The following is a 655-amino-acid chain: Probable alpha-galactosidase D (655 aa).

The N-terminal stretch at 1–16 (MLPKIFYLSLLPAALG) is a signal peptide. 2 N-linked (GlcNAc...) asparagine glycosylation sites follow: Asn47 and Asn91. Cys124 and Cys155 are joined by a disulfide. The active-site Nucleophile is Asp153. N-linked (GlcNAc...) asparagine glycans are attached at residues Asn180 and Asn189. Residue 198-202 (EWGID) participates in substrate binding. The active-site Proton donor is the Asp220. N-linked (GlcNAc...) asparagine glycosylation is found at Asn349, Asn436, Asn458, Asn503, Asn537, Asn541, and Asn580.

The protein belongs to the glycosyl hydrolase 27 family.

The protein resides in the secreted. The catalysed reaction is Hydrolysis of terminal, non-reducing alpha-D-galactose residues in alpha-D-galactosides, including galactose oligosaccharides, galactomannans and galactolipids.. In terms of biological role, hydrolyzes a variety of simple alpha-D-galactoside as well as more complex molecules such as oligosaccharides and polysaccharides. This Aspergillus flavus (strain ATCC 200026 / FGSC A1120 / IAM 13836 / NRRL 3357 / JCM 12722 / SRRC 167) protein is Probable alpha-galactosidase D (aglD).